A 342-amino-acid chain; its full sequence is Ferredoxin--NADP reductase (342 aa).

Positions 17, 36, 44, 49, 89, 124, 289, and 330 each coordinate FAD.

This sequence belongs to the ferredoxin--NADP reductase type 2 family. In terms of assembly, homodimer. FAD is required as a cofactor.

The enzyme catalyses 2 reduced [2Fe-2S]-[ferredoxin] + NADP(+) + H(+) = 2 oxidized [2Fe-2S]-[ferredoxin] + NADPH. The sequence is that of Ferredoxin--NADP reductase from Nitrobacter winogradskyi (strain ATCC 25391 / DSM 10237 / CIP 104748 / NCIMB 11846 / Nb-255).